Reading from the N-terminus, the 590-residue chain is Phosphomethylpyrimidine synthase (590 aa).

Substrate is bound by residues Asn-197, Met-226, Tyr-255, His-291, 311 to 313 (SRG), 352 to 355 (DGLR), and Glu-391. His-395 is a Zn(2+) binding site. Tyr-418 provides a ligand contact to substrate. His-459 is a Zn(2+) binding site. Positions 539, 542, and 547 each coordinate [4Fe-4S] cluster.

Belongs to the ThiC family. [4Fe-4S] cluster serves as cofactor.

The enzyme catalyses 5-amino-1-(5-phospho-beta-D-ribosyl)imidazole + S-adenosyl-L-methionine = 4-amino-2-methyl-5-(phosphooxymethyl)pyrimidine + CO + 5'-deoxyadenosine + formate + L-methionine + 3 H(+). The protein operates within cofactor biosynthesis; thiamine diphosphate biosynthesis. Its function is as follows. Catalyzes the synthesis of the hydroxymethylpyrimidine phosphate (HMP-P) moiety of thiamine from aminoimidazole ribotide (AIR) in a radical S-adenosyl-L-methionine (SAM)-dependent reaction. The protein is Phosphomethylpyrimidine synthase of Bacillus velezensis (strain DSM 23117 / BGSC 10A6 / LMG 26770 / FZB42) (Bacillus amyloliquefaciens subsp. plantarum).